A 439-amino-acid chain; its full sequence is Trigger factor (439 aa).

One can recognise a PPIase FKBP-type domain in the interval 162–247 (GDRLTLDFIG…LKKVEAMILP (86 aa)).

The protein belongs to the FKBP-type PPIase family. Tig subfamily.

Its subcellular location is the cytoplasm. It catalyses the reaction [protein]-peptidylproline (omega=180) = [protein]-peptidylproline (omega=0). Functionally, involved in protein export. Acts as a chaperone by maintaining the newly synthesized protein in an open conformation. Functions as a peptidyl-prolyl cis-trans isomerase. This is Trigger factor from Dichelobacter nodosus (strain VCS1703A).